The sequence spans 494 residues: 1-aminocyclopropane-1-carboxylate synthase 2 (494 aa).

Lys-279 carries the post-translational modification N6-(pyridoxal phosphate)lysine. Positions 474-494 (NVLNSPHTMSPHSPLVRARTY) are disordered. A compositionally biased stretch (polar residues) spans 475–484 (VLNSPHTMSP).

This sequence belongs to the class-I pyridoxal-phosphate-dependent aminotransferase family. Homodimer. Requires pyridoxal 5'-phosphate as cofactor.

It carries out the reaction S-adenosyl-L-methionine = 1-aminocyclopropane-1-carboxylate + S-methyl-5'-thioadenosine + H(+). The protein operates within alkene biosynthesis; ethylene biosynthesis via S-adenosyl-L-methionine; ethylene from S-adenosyl-L-methionine: step 1/2. Its function is as follows. Catalyzes the formation of 1-aminocyclopropane-1-carboxylate, a direct precursor of ethylene in higher plants. The sequence is that of 1-aminocyclopropane-1-carboxylate synthase 2 (ACS2) from Cucurbita pepo (Vegetable marrow).